The primary structure comprises 477 residues: RTX-III toxin determinant D (477 aa).

At 1-59 (MKLWILGLGEFFQRYRNIWREIWKIRKQLDTPARQKDENEFLPRHLELIETPISKKPRL) the chain is on the cytoplasmic side. A helical transmembrane segment spans residues 60–77 (IAYLIMLFLFLAIVISII). Over 78 to 477 (SKVEIVASAT…ESITESLRER (400 aa)) the chain is Periplasmic.

This sequence belongs to the membrane fusion protein (MFP) (TC 8.A.1) family.

It is found in the cell inner membrane. In terms of biological role, involved in the transport of the toxin RTX-III. The polypeptide is RTX-III toxin determinant D (apxIIID) (Actinobacillus pleuropneumoniae (Haemophilus pleuropneumoniae)).